The following is an 86-amino-acid chain: MARLTVEDCIDNIDNRFLLVLAAAKRARQLAMGATPTVPWDKDKPTVVALREIAEGHIDVGVMDTASAREHAKESQVSEEEVREES.

Over residues S67 to Q76 the composition is skewed to basic and acidic residues. The segment at S67 to S86 is disordered. The segment covering V77–S86 has biased composition (acidic residues).

This sequence belongs to the RNA polymerase subunit omega family. The RNAP catalytic core consists of 2 alpha, 1 beta, 1 beta' and 1 omega subunit. When a sigma factor is associated with the core the holoenzyme is formed, which can initiate transcription.

The catalysed reaction is RNA(n) + a ribonucleoside 5'-triphosphate = RNA(n+1) + diphosphate. Functionally, promotes RNA polymerase assembly. Latches the N- and C-terminal regions of the beta' subunit thereby facilitating its interaction with the beta and alpha subunits. This is DNA-directed RNA polymerase subunit omega from Nitrosococcus oceani (strain ATCC 19707 / BCRC 17464 / JCM 30415 / NCIMB 11848 / C-107).